A 360-amino-acid polypeptide reads, in one-letter code: GDSL esterase/lipase At1g06990 (360 aa).

The N-terminal stretch at 1-22 is a signal peptide; the sequence is MLIHVIIFMIITTMQFSTTCHA. 2 N-linked (GlcNAc...) asparagine glycosylation sites follow: N26 and N31. The Nucleophile role is filled by S44. N-linked (GlcNAc...) asparagine glycosylation is found at N73, N126, and N272. Residues D335 and H338 contribute to the active site.

Belongs to the 'GDSL' lipolytic enzyme family.

It is found in the secreted. The chain is GDSL esterase/lipase At1g06990 from Arabidopsis thaliana (Mouse-ear cress).